A 443-amino-acid polypeptide reads, in one-letter code: Thymidine phosphorylase (443 aa).

The protein belongs to the thymidine/pyrimidine-nucleoside phosphorylase family. Homodimer.

It carries out the reaction thymidine + phosphate = 2-deoxy-alpha-D-ribose 1-phosphate + thymine. It functions in the pathway pyrimidine metabolism; dTMP biosynthesis via salvage pathway; dTMP from thymine: step 1/2. Its function is as follows. The enzymes which catalyze the reversible phosphorolysis of pyrimidine nucleosides are involved in the degradation of these compounds and in their utilization as carbon and energy sources, or in the rescue of pyrimidine bases for nucleotide synthesis. The polypeptide is Thymidine phosphorylase (Aeromonas salmonicida (strain A449)).